The sequence spans 431 residues: MVSLEKNDHLMLARQLPLKSVALILAGGRGTRLKDLTNKRAKPAVHFGGKFRIIDFALSNCINSGIRRMGVITQYQSHTLVQHIQRGWSFFNEEMNEFVDLLPAQQRMKGENWYRGTADAVTQNLDIIRRYKAEYVVILAGDHIYKQDYSRMLIDHVEKGARCTVACMPVPIEEASAFGVMAVDENDKIIEFVEKPANPPSMPNDPSKSLASMGIYVFDADYLYELLEEDDRDKNSSHDFGKDLIPKITEAGLAYAHPFPLSCVQSDPDAEPYWRDVGTLEAYWKANLDLASVVPELDMYDRNWPIRTYNESLPPAKFVQDRSGSHGMTLNSLVSGGCVISGSVVVQSVLFSRVRVNSFCNIDSAVLLPEVWVGRSCRLRRCVIDRACVIPEGMVIGENAEEDARRFYRSEEGIVLVTREMLRKLGHKQER.

K39 is a binding site for beta-D-fructose 1,6-bisphosphate. The AMP site is built by R40, H46, and R52. Y114 contributes to the alpha-D-glucose 1-phosphate binding site. R130 lines the AMP pocket. Alpha-D-glucose 1-phosphate-binding positions include G179, E194–K195, and S212. AMP-binding residues include E370 and R386. Beta-D-fructose 1,6-bisphosphate is bound by residues R419–R423 and Q429–R431.

Belongs to the bacterial/plant glucose-1-phosphate adenylyltransferase family. As to quaternary structure, homotetramer.

It carries out the reaction alpha-D-glucose 1-phosphate + ATP + H(+) = ADP-alpha-D-glucose + diphosphate. Its pathway is glycan biosynthesis; glycogen biosynthesis. Allosterically activated by fructose-1,6-bisphosphate (F16BP) and inhibited by AMP. In terms of biological role, involved in the biosynthesis of ADP-glucose, a building block required for the elongation reactions to produce glycogen. Catalyzes the reaction between ATP and alpha-D-glucose 1-phosphate (G1P) to produce pyrophosphate and ADP-Glc. This chain is Glucose-1-phosphate adenylyltransferase, found in Escherichia coli O7:K1 (strain IAI39 / ExPEC).